Here is a 332-residue protein sequence, read N- to C-terminus: Methionyl-tRNA formyltransferase (332 aa).

114-117 (SLLP) is a (6S)-5,6,7,8-tetrahydrofolate binding site.

Belongs to the Fmt family.

The enzyme catalyses L-methionyl-tRNA(fMet) + (6R)-10-formyltetrahydrofolate = N-formyl-L-methionyl-tRNA(fMet) + (6S)-5,6,7,8-tetrahydrofolate + H(+). In terms of biological role, attaches a formyl group to the free amino group of methionyl-tRNA(fMet). The formyl group appears to play a dual role in the initiator identity of N-formylmethionyl-tRNA by promoting its recognition by IF2 and preventing the misappropriation of this tRNA by the elongation apparatus. The polypeptide is Methionyl-tRNA formyltransferase (Corynebacterium aurimucosum (strain ATCC 700975 / DSM 44827 / CIP 107346 / CN-1) (Corynebacterium nigricans)).